Consider the following 211-residue polypeptide: CASP-like protein 1B1 (211 aa).

A disordered region spans residues Met1 to Ser29. The Cytoplasmic portion of the chain corresponds to Met1 to Thr55. A compositionally biased stretch (low complexity) spans Thr9–Thr26. A helical transmembrane segment spans residues Ala56–Val76. At Gly77–Ala94 the chain is on the extracellular side. A helical transmembrane segment spans residues Phe95–Phe115. Topologically, residues Arg116–Arg123 are cytoplasmic. Residues Met124 to Ala144 traverse the membrane as a helical segment. The Extracellular segment spans residues Ala145 to Arg176. The chain crosses the membrane as a helical span at residues Gly177–Leu197. Residues Ser198–Glu211 are Cytoplasmic-facing.

The protein belongs to the Casparian strip membrane proteins (CASP) family. Homodimer and heterodimers.

It is found in the cell membrane. The protein is CASP-like protein 1B1 of Sorghum bicolor (Sorghum).